The following is an 82-amino-acid chain: Protein costars (82 aa).

Belongs to the costars family.

Its function is as follows. Modulates actin dynamics and cell motility. The polypeptide is Protein costars (cosA) (Dictyostelium discoideum (Social amoeba)).